A 280-amino-acid polypeptide reads, in one-letter code: Hematopoietically-expressed homeobox protein HHEX homolog (280 aa).

Disordered regions lie at residues Met-1 to Pro-35 and Arg-221 to Ala-280. The homeobox DNA-binding region spans Arg-165–Lys-224. The segment covering Gly-232 to Arg-252 has biased composition (basic and acidic residues).

The protein localises to the nucleus. In terms of biological role, transcription factor that may play a central role in activating or maintaining gene expression in the vegetal pole. Part of a gene regulatory circuit with Erg and Tgif that operates early in mesoderm development. The chain is Hematopoietically-expressed homeobox protein HHEX homolog from Patiria miniata (Bat star).